Here is a 115-residue protein sequence, read N- to C-terminus: NAD(P)H-quinone oxidoreductase subunit M (115 aa).

It belongs to the complex I NdhM subunit family. NDH-1 can be composed of about 15 different subunits; different subcomplexes with different compositions have been identified which probably have different functions.

The protein localises to the cellular thylakoid membrane. The enzyme catalyses a plastoquinone + NADH + (n+1) H(+)(in) = a plastoquinol + NAD(+) + n H(+)(out). It carries out the reaction a plastoquinone + NADPH + (n+1) H(+)(in) = a plastoquinol + NADP(+) + n H(+)(out). In terms of biological role, NDH-1 shuttles electrons from an unknown electron donor, via FMN and iron-sulfur (Fe-S) centers, to quinones in the respiratory and/or the photosynthetic chain. The immediate electron acceptor for the enzyme in this species is believed to be plastoquinone. Couples the redox reaction to proton translocation, and thus conserves the redox energy in a proton gradient. Cyanobacterial NDH-1 also plays a role in inorganic carbon-concentration. The sequence is that of NAD(P)H-quinone oxidoreductase subunit M from Prochlorococcus marinus (strain MIT 9303).